Consider the following 250-residue polypeptide: Large ribosomal subunit protein uL13c (250 aa).

The transit peptide at 1–47 directs the protein to the chloroplast; it reads MATMACASSLTFPSAQTQKSFFGTNVKQTPVLSFPRPTVAAAVAVSA.

In terms of assembly, component of the chloroplast large ribosomal subunit (LSU). Mature 70S chloroplast ribosomes of higher plants consist of a small (30S) and a large (50S) subunit. The 30S small subunit contains 1 molecule of ribosomal RNA (16S rRNA) and 24 different proteins. The 50S large subunit contains 3 rRNA molecules (23S, 5S and 4.5S rRNA) and 33 different proteins.

It localises to the plastid. The protein resides in the chloroplast. In terms of biological role, component of the chloroplast ribosome (chloro-ribosome), a dedicated translation machinery responsible for the synthesis of chloroplast genome-encoded proteins, including proteins of the transcription and translation machinery and components of the photosynthetic apparatus. This chain is Large ribosomal subunit protein uL13c (RPL13), found in Spinacia oleracea (Spinach).